The chain runs to 346 residues: Protein tas (346 aa).

Y53 functions as the Proton donor in the catalytic mechanism. 234–244 contributes to the NADP(+) binding site; the sequence is SCLGFGTLTGK.

It belongs to the aldo/keto reductase family. Aldo/keto reductase 2 subfamily.

The chain is Protein tas (tas) from Escherichia coli (strain K12).